Here is a 163-residue protein sequence, read N- to C-terminus: Single-stranded DNA-binding protein 2 (163 aa).

The SSB domain occupies 1 to 104; sequence MINNVVLVGR…VVADNFQMLE (104 aa). The segment at 109-163 is disordered; that stretch reads REGGSTGSFNGGFNNNTSSSNSYSAPAQQTPNFGRDDSPFGNSNPMDISDDDLPF. Positions 119 to 130 are enriched in low complexity; sequence GGFNNNTSSSNS. The span at 131–140 shows a compositional bias: polar residues; that stretch reads YSAPAQQTPN. The Important for interaction with partner proteins motif lies at 158 to 163; the sequence is DDDLPF.

As to quaternary structure, homotetramer.

Functionally, plays an important role in DNA replication, recombination and repair. Binds to ssDNA and to an array of partner proteins to recruit them to their sites of action during DNA metabolism. This is Single-stranded DNA-binding protein 2 (ssb2) from Streptococcus pyogenes serotype M6 (strain ATCC BAA-946 / MGAS10394).